The sequence spans 286 residues: Glycine--tRNA ligase alpha subunit (286 aa).

Belongs to the class-II aminoacyl-tRNA synthetase family. As to quaternary structure, tetramer of two alpha and two beta subunits.

Its subcellular location is the cytoplasm. The enzyme catalyses tRNA(Gly) + glycine + ATP = glycyl-tRNA(Gly) + AMP + diphosphate. This Campylobacter concisus (strain 13826) protein is Glycine--tRNA ligase alpha subunit.